The primary structure comprises 1776 residues: Signal-induced proliferation-associated 1-like protein 3 (1776 aa).

Disordered stretches follow at residues Ala-41 to Phe-157 and Pro-240 to Arg-325. The span at Pro-54 to Pro-69 shows a compositional bias: low complexity. 2 stretches are compositionally biased toward polar residues: residues Glu-89 to Thr-99 and Arg-112 to Ser-129. Position 94 is a phosphoserine (Ser-94). Residues Ala-131 to Ser-140 show a composition bias toward basic residues. Ser-140 bears the Phosphoserine mark. The segment covering Gly-257–Gln-268 has biased composition (polar residues). Ser-394 carries the phosphoserine modification. The interval Ser-438 to His-461 is disordered. The region spanning Leu-605–Leu-822 is the Rap-GAP domain. Positions Asp-960–Ser-1024 constitute a PDZ domain. 3 disordered regions span residues Pro-1040–Leu-1104, Arg-1117–Ala-1164, and Asp-1184–Gly-1632. Composition is skewed to polar residues over residues Ala-1074 to Leu-1104 and Pro-1151 to Ser-1160. Residues Asp-1190–Gly-1201 show a composition bias toward low complexity. Residues Ser-1239–Gly-1255 show a composition bias toward basic and acidic residues. Residues Ser-1260–Ser-1275 show a composition bias toward low complexity. Residues Gly-1298–Cys-1316 are compositionally biased toward polar residues. Over residues Ser-1344–Val-1357 the composition is skewed to basic and acidic residues. Ser-1358 carries the post-translational modification Phosphoserine. Thr-1381 bears the Phosphothreonine mark. Residues Val-1409 to Pro-1436 are compositionally biased toward polar residues. An N6-acetyllysine modification is found at Lys-1442. Basic and acidic residues predominate over residues Thr-1503 to Ile-1512. Polar residues-rich tracts occupy residues Gly-1526–Ser-1541 and Leu-1566–Leu-1578. Phosphoserine occurs at positions 1538 and 1541. The span at Pro-1589 to Gly-1601 shows a compositional bias: low complexity. Phosphoserine is present on residues Ser-1614 and Ser-1617. The span at Asp-1620–Asp-1630 shows a compositional bias: basic and acidic residues. Ser-1672 is modified (phosphoserine). The disordered stretch occupies residues Ala-1678 to Ser-1705. Phosphothreonine occurs at positions 1694 and 1698. Positions Gln-1715–Phe-1769 form a coiled coil.

The protein resides in the apical cell membrane. Its function is as follows. Plays a critical role in epithelial cell morphogenesis, polarity, adhesion and cytoskeletal organization in the lens. The protein is Signal-induced proliferation-associated 1-like protein 3 (Sipa1l3) of Mus musculus (Mouse).